The primary structure comprises 678 residues: uncharacterized protein (678 aa).

This is an uncharacterized protein from Ostreid herpesvirus 1 (isolate France) (OsHV-1).